Reading from the N-terminus, the 94-residue chain is Neutrophil antibiotic peptide NP-1 (94 aa).

Positions Met-1–Ala-19 are cleaved as a signal peptide. A propeptide spanning residues Lys-20–Gly-62 is cleaved from the precursor. 3 disulfide bridges follow: Cys-65–Cys-93, Cys-67–Cys-82, and Cys-72–Cys-92. At Tyr-84 the chain carries Phosphotyrosine.

It belongs to the alpha-defensin family. In terms of tissue distribution, highest expression in bone marrow and to a much lesser extent in small intestine.

It is found in the secreted. Functionally, active in vitro against S.aureus, fungi, Gram-positive and Gram-negative bacteria and to a lesser extent against an enveloped virus. This is Neutrophil antibiotic peptide NP-1 from Rattus norvegicus (Rat).